A 323-amino-acid chain; its full sequence is MDITEKLRLITRNAEEVVTEEELRQLIETKEKPRAYVGYEPSGEIHLGHMMTVQKLMDLQEAGFEIIVLLADIHAYLNEKGTFEEIAEVADYNKKVFIALGLDESRAKFVLGSEYQLSRDYVLDVLKMARITTLNRARRSMDEVSRRKEDPMVSQMIYPLMQALDIAHLGVDLAVGGIDQRKIHMLARENLPRLGYSSPVCLHTPILVGLDGQKMSSSKGNYISVRDPPEEVERKIRKAYCPAGVVEENPILDIAKYHILPRFGKIVVERDAKFGGDVEYASFEELAEDFKSGQLHPLDLKIAVAKYLNMLLEDARKRLGVSV.

Tyr36 is a binding site for L-tyrosine. A 'HIGH' region motif is present at residues 41-49; that stretch reads PSGEIHLGH. L-tyrosine contacts are provided by Tyr158, Gln162, Asp165, and Gln180. The 'KMSKS' region signature appears at 214 to 218; the sequence is KMSSS. Ser217 is an ATP binding site.

This sequence belongs to the class-I aminoacyl-tRNA synthetase family. TyrS type 3 subfamily. Homodimer.

The protein localises to the cytoplasm. The enzyme catalyses tRNA(Tyr) + L-tyrosine + ATP = L-tyrosyl-tRNA(Tyr) + AMP + diphosphate + H(+). Catalyzes the attachment of tyrosine to tRNA(Tyr) in a two-step reaction: tyrosine is first activated by ATP to form Tyr-AMP and then transferred to the acceptor end of tRNA(Tyr). This Archaeoglobus fulgidus (strain ATCC 49558 / DSM 4304 / JCM 9628 / NBRC 100126 / VC-16) protein is Tyrosine--tRNA ligase.